A 242-amino-acid chain; its full sequence is ATP synthase subunit a (242 aa).

The next 7 membrane-spanning stretches (helical) occupy residues 23–43 (ISFTNCALFMILASLVSAVLL), 62–82 (VELIYNFVVGAIESNAGVGGL), 84–104 (YIPFVLSIFLFVLACNIIGIL), 113–133 (HVSVTLALSVVVCASVTVLGF), 143–163 (IFLPEGTPLWLAPMMVFIKLF), 176–196 (LAANMIAGHTIIAVIAEFVLK), and 201–221 (LAPLPFAFIMVLIAFEIFVAI).

This sequence belongs to the ATPase A chain family. F-type ATPases have 2 components, CF(1) - the catalytic core - and CF(0) - the membrane proton channel. CF(1) has five subunits: alpha(3), beta(3), gamma(1), delta(1), epsilon(1). CF(0) has three main subunits: a(1), b(2) and c(9-12). The alpha and beta chains form an alternating ring which encloses part of the gamma chain. CF(1) is attached to CF(0) by a central stalk formed by the gamma and epsilon chains, while a peripheral stalk is formed by the delta and b chains.

The protein resides in the cell inner membrane. Its function is as follows. Key component of the proton channel; it plays a direct role in the translocation of protons across the membrane. This is ATP synthase subunit a from Anaplasma phagocytophilum (strain HZ).